The following is a 473-amino-acid chain: Photosystem II CP43 reaction center protein (473 aa).

Residues 1 to 14 constitute a propeptide that is removed on maturation; sequence MKILYSQRRFYHVE. The residue at position 15 (threonine 15) is an N-acetylthreonine. Threonine 15 is subject to Phosphothreonine. 5 helical membrane-spanning segments follow: residues 69–93, 134–155, 178–200, 255–275, and 291–312; these read LFEV…PHLA, LIGP…KDKN, KALY…RKIT, KPFA…LSYS, and WFNN…ASQA. [CaMn4O5] cluster is bound at residue glutamate 367. Residues 447-471 form a helical membrane-spanning segment; that stretch reads RARAAAAGFEKGIDRDFEPVLSMTP.

It belongs to the PsbB/PsbC family. PsbC subfamily. PSII is composed of 1 copy each of membrane proteins PsbA, PsbB, PsbC, PsbD, PsbE, PsbF, PsbH, PsbI, PsbJ, PsbK, PsbL, PsbM, PsbT, PsbX, PsbY, PsbZ, Psb30/Ycf12, at least 3 peripheral proteins of the oxygen-evolving complex and a large number of cofactors. It forms dimeric complexes. The cofactor is Binds multiple chlorophylls and provides some of the ligands for the Ca-4Mn-5O cluster of the oxygen-evolving complex. It may also provide a ligand for a Cl- that is required for oxygen evolution. PSII binds additional chlorophylls, carotenoids and specific lipids..

It is found in the plastid. The protein resides in the chloroplast thylakoid membrane. One of the components of the core complex of photosystem II (PSII). It binds chlorophyll and helps catalyze the primary light-induced photochemical processes of PSII. PSII is a light-driven water:plastoquinone oxidoreductase, using light energy to abstract electrons from H(2)O, generating O(2) and a proton gradient subsequently used for ATP formation. The sequence is that of Photosystem II CP43 reaction center protein from Physcomitrium patens (Spreading-leaved earth moss).